The sequence spans 577 residues: Arginine--tRNA ligase (577 aa).

The short motif at 122-132 is the 'HIGH' region element; that stretch reads PNVAKEMHVGH.

The protein belongs to the class-I aminoacyl-tRNA synthetase family. Monomer.

It is found in the cytoplasm. It carries out the reaction tRNA(Arg) + L-arginine + ATP = L-arginyl-tRNA(Arg) + AMP + diphosphate. This is Arginine--tRNA ligase from Aliivibrio fischeri (strain ATCC 700601 / ES114) (Vibrio fischeri).